The following is a 95-amino-acid chain: Aspartyl/glutamyl-tRNA(Asn/Gln) amidotransferase subunit C (95 aa).

Belongs to the GatC family. As to quaternary structure, heterotrimer of A, B and C subunits.

The catalysed reaction is L-glutamyl-tRNA(Gln) + L-glutamine + ATP + H2O = L-glutaminyl-tRNA(Gln) + L-glutamate + ADP + phosphate + H(+). The enzyme catalyses L-aspartyl-tRNA(Asn) + L-glutamine + ATP + H2O = L-asparaginyl-tRNA(Asn) + L-glutamate + ADP + phosphate + 2 H(+). Functionally, allows the formation of correctly charged Asn-tRNA(Asn) or Gln-tRNA(Gln) through the transamidation of misacylated Asp-tRNA(Asn) or Glu-tRNA(Gln) in organisms which lack either or both of asparaginyl-tRNA or glutaminyl-tRNA synthetases. The reaction takes place in the presence of glutamine and ATP through an activated phospho-Asp-tRNA(Asn) or phospho-Glu-tRNA(Gln). In Gluconacetobacter diazotrophicus (strain ATCC 49037 / DSM 5601 / CCUG 37298 / CIP 103539 / LMG 7603 / PAl5), this protein is Aspartyl/glutamyl-tRNA(Asn/Gln) amidotransferase subunit C.